The chain runs to 885 residues: Leucine--tRNA ligase (885 aa).

Residues 48-58 (PYPSGKLHMGH) carry the 'HIGH' region motif. The 'KMSKS' region motif lies at 639–643 (TMSKS). Lys642 lines the ATP pocket.

Belongs to the class-I aminoacyl-tRNA synthetase family.

It is found in the cytoplasm. The enzyme catalyses tRNA(Leu) + L-leucine + ATP = L-leucyl-tRNA(Leu) + AMP + diphosphate. The chain is Leucine--tRNA ligase from Bordetella avium (strain 197N).